The following is a 445-amino-acid chain: UPF0210 protein SPH_0352 (445 aa).

The protein belongs to the UPF0210 family. In terms of assembly, homodimer.

This chain is UPF0210 protein SPH_0352, found in Streptococcus pneumoniae (strain Hungary19A-6).